A 210-amino-acid polypeptide reads, in one-letter code: ESCRT-III complex subunit did4 (210 aa).

The interval 1–38 is disordered; it reads MGLTSWLFGGGKSPQEQLRAHQRSLGRAERELDRERTK. A coiled-coil region spans residues 15–97; that stretch reads QEQLRAHQRS…AISLRLQTMR (83 aa). Over residues 26–38 the composition is skewed to basic and acidic residues; that stretch reads GRAERELDRERTK.

It belongs to the SNF7 family. In terms of assembly, core component of the ESCRT-III complex (endosomal sorting required for transport complex III). ESCRT-III appears to be sequentially assembled as a flat lattice on the endosome membrane.

The protein resides in the cytoplasm. It localises to the endosome membrane. Functionally, required for the sorting and concentration of proteins resulting in the entry of these proteins into the invaginating vesicles of the multivesicular body (MVB). Acts a component of the ESCRT-III complex, which appears to be critical for late steps in MVB sorting, such as membrane invagination and final cargo sorting and recruitment of late-acting components of the sorting machinery. The MVB pathway requires the sequential function of ESCRT-O, -I,-II and -III complex assemblies. The sequence is that of ESCRT-III complex subunit did4 (did4) from Schizosaccharomyces pombe (strain 972 / ATCC 24843) (Fission yeast).